The primary structure comprises 271 residues: Glutamate racemase 3 (271 aa).

Substrate contacts are provided by residues 15–16 and 47–48; these read DS and YG. The active-site Proton donor/acceptor is the Cys78. Position 79–80 (79–80) interacts with substrate; the sequence is NT. The active-site Proton donor/acceptor is Cys185. 186-187 is a substrate binding site; sequence TH.

The protein belongs to the aspartate/glutamate racemases family.

It carries out the reaction L-glutamate = D-glutamate. The protein operates within cell wall biogenesis; peptidoglycan biosynthesis. Provides the (R)-glutamate required for cell wall biosynthesis. The protein is Glutamate racemase 3 of Caldanaerobacter subterraneus subsp. tengcongensis (strain DSM 15242 / JCM 11007 / NBRC 100824 / MB4) (Thermoanaerobacter tengcongensis).